Consider the following 316-residue polypeptide: LIM/homeobox protein lim-6 (316 aa).

2 consecutive LIM zinc-binding domains span residues 40 to 101 and 102 to 163; these read KLCS…LYGK and RCRR…ICNF. A DNA-binding region (homeobox) is located at residues 186 to 245; that stretch reads PKRPRTILNAQQRRQFKTAFERSSKPSRKVREQLANETGLSVRVVQVWFQNQRAKIKKLN. A disordered region spans residues 244–297; it reads LNKKDSDSGDTFKHGPGSEGRSTEDIRSSDDEEESVINLDADEVETSETSSYTD. A compositionally biased stretch (basic and acidic residues) spans 246-256; sequence KKDSDSGDTFK. A compositionally biased stretch (acidic residues) spans 273-289; it reads DDEEESVINLDADEVET.

Its subcellular location is the nucleus. Functionally, transcription factor. Required for the terminal differentiation of sensory- and motor-neurons, especially GABAergic neurons, and for morphological aspects of uterine development. Plays a role in the cell-type-specific regulation of glutamic acid decarboxylase unc-25. Involved in promoting sleep-like behavioral quiescence, acting by modulating expression of transcription factor aptf-1 in the single sleep-active ring interneuron RIS. Plays a role in regulation of RIS differentiation. Required for the functional asymmetry of the ASER and ASEL chemosensory neuron pair, conferring the ability to discriminate sodium from chloride, perhaps by modulating expression of receptor-type guanylate cyclases, such as gcy-5. Involved in regulating postembryonic axon maintenance in the ventral nerve cord, acting in concert with LIM homeobox protein ceh-14, via modulation of expression of immunoglobulin domain zig genes in the interneuron PVT. May play a role in the functions of the excretory gland cell. This is LIM/homeobox protein lim-6 from Caenorhabditis elegans.